Here is a 105-residue protein sequence, read N- to C-terminus: Replication restart protein PriB (105 aa).

Residues 1–102 enclose the SSB domain; it reads MTANRLVLTG…LHAEQIELID (102 aa).

It belongs to the PriB family. As to quaternary structure, homodimer. Interacts with PriA and DnaT. Component of the replication restart primosome. Primosome assembly occurs via a 'hand-off' mechanism. PriA binds to replication forks, subsequently PriB then DnaT bind; DnaT then displaces ssDNA to generate the helicase loading substrate.

Functionally, involved in the restart of stalled replication forks, which reloads the replicative helicase on sites other than the origin of replication; the PriA-PriB pathway is the major replication restart pathway. During primosome assembly it facilitates complex formation between PriA and DnaT on DNA; stabilizes PriA on DNA. Stimulates the DNA unwinding activity of PriA helicase. The protein is Replication restart protein PriB of Proteus mirabilis (strain HI4320).